A 304-amino-acid polypeptide reads, in one-letter code: MARTDDDTWDLATSVGATATMVAAGRARATRDGLIDDPFAEPLVRAVGVDFFTRWAAGELDAADVDVPGAAWGMQRMTDMLTARTRYIDAFFAEAGAAGIRQVVILASGLDARAYRLPWPAGTTVFEIDQPRVLEFKAATIAQLGAEPTAPVRAVAVDLRHDWPSALRQAGFDVGRPAAWAAEGLLGFLPPQAQDRLLDNVTALSADGSQLVAEVFANTGASGDALNAAGEKWRRHGLDVALDDLGFPGERNDPASYLQQLGWQPVRTPLNQMLANNGLPLQSTEPGAPFAQNYYCTAVLNKAG.

Residues aspartate 129 and 158-159 (DL) contribute to the S-adenosyl-L-methionine site.

Belongs to the UPF0677 family.

Exhibits S-adenosyl-L-methionine-dependent methyltransferase activity. The protein is Putative S-adenosyl-L-methionine-dependent methyltransferase MAP_3385 of Mycolicibacterium paratuberculosis (strain ATCC BAA-968 / K-10) (Mycobacterium paratuberculosis).